The following is a 393-amino-acid chain: Mitogen-activated protein kinase homolog NTF4 (393 aa).

The interval 1–32 is disordered; that stretch reads MDGPAHQTDTVMSDAAGQQPAPPSQPVAGIDN. In terms of domain architecture, Protein kinase spans 60-345; the sequence is KPPIMPIGKG…VEDALAHPYL (286 aa). Residues 66-74 and lysine 89 each bind ATP; that span reads IGKGAYGIV. Aspartate 186 acts as the Proton acceptor in catalysis. Threonine 218 carries the post-translational modification Phosphothreonine. The TXY signature appears at 218–220; it reads TEY. Tyrosine 220 bears the Phosphotyrosine mark.

This sequence belongs to the protein kinase superfamily. CMGC Ser/Thr protein kinase family. MAP kinase subfamily. Mg(2+) serves as cofactor. In terms of processing, dually phosphorylated on Thr-218 and Tyr-220, which activates the enzyme. Very low autophosphorylation, although dramatically increased when Mn(2+) is added to the reaction instead of Mg(2+).

It catalyses the reaction L-seryl-[protein] + ATP = O-phospho-L-seryl-[protein] + ADP + H(+). It carries out the reaction L-threonyl-[protein] + ATP = O-phospho-L-threonyl-[protein] + ADP + H(+). With respect to regulation, activated by tyrosine and threonine phosphorylation. The protein is Mitogen-activated protein kinase homolog NTF4 (NTF4) of Nicotiana tabacum (Common tobacco).